A 1734-amino-acid chain; its full sequence is MGQTVTTPLSLTLEHWGDVQRIASNQSVEVKKRRRVTFCPAEWPTFDVGWPQDGTFNLDIILQVKSKVFSPGPHGHPDQVPYIVTWEAIAYEPPSWVKPFVSPKLSLSPTAPILPSGPSTQPPPRSALYPALTPSIKPRPSKPQVLSDNGGPLIDLLTEDPPPYGEQGPSSPDGDGDREEATYTSEIPAPSPMVSRLRGKRDPPAADSTTSRAFPLRLGGNGQLQYWPFSSSDLYNWKNNNPSFSEDPGKLTALIESVLTTHQPTWDDCQQLLGTLLTGEEKQRVLLEARKAVRGNDGRPTQLPNEVNSAFPLERPDWDYTTPEGRNHLVLYRQLLLAGLQNAGRSPTNLAKVKGITQGPNESPSAFLERLKEAYRRYTPYDPEDHGQETSVSMSFIWQSAPDIGRKLERLEDLKSKTLRDLVREAEKIFNKRETPEEREERFRRETEENEERRRAEDEQREKERDRRRQREMSKLLATVVTGQRQDRQGGERKRPQLDKDQCAYCKEKGHWAKDCPKKPRGPRGPRPQTSLLTLDDQGGQGQEPPPEPRITLKVGGQPVTFLVDTGAQHSVLTQNPGPLSDRSAWVQGATGGKRYRWTTDRKVHLATGKVTHSFLHVPDCPYPLLGRDLLTKLKAQIHFKGSGAQIVGPMGQPLQVLTLNIEDEYRLHEISTEPDVSPGSTWLSDFPQAWAETGGMGLAVRQAPLIIPLKATSTPVSIKQYPMSQEAKLGIKPHIQRLLDQGILVPCQSPWNTPLLPVKKPGTNDYRPVQGLREVNKRVEDIHPTVPNPYNLLSGLPTSHRWYTVLDLKDAFFCLRLHPTSQPLFASEWRDPGMGISGQLTWTRLPQGFKNSPTLFDEALHRGLADFRIQHPDLILLQYVDDLLLAATSELDCQQGTRALLKTLGNLGYRASAKKAQICQKQVKYLGYLLREGQRWLTEARKETVMGQPTPKTPRQLREFLGTAGFCRLWIPRFAEMAAPLYPLTKTGTLFNWGPDQQKAYHEIKQALLTAPALGLPDLTKPFELFVDEKQGYAKGVLTQKLGPWRRPVAYLSKKLDPVAAGWPPCLRMVAAIAVLTKDAGKLTMGQPLVILAPHAVEALVKQPPDRWLSNARMTHYQAMLLDTDRVQFGPVVALNPATLLPLPEEGAPHDCLEILAETHGTEPDLTDQPIPDADHTWYTDGSSFLQEGQRKAGAAVTTETEVIWARALPAGTSAQRAELIALTQALKMAEGKRLNVYTDSRYAFATAHIHGEIYKRRGLLTSEGREIKNKSEILALLKALFLPKRLSIIHCLGHQKGDSAEARGNRLADQAAREAAIKTPPDTSTLLIEDSTPYTPAYFHYTETDLKKLRELGATYNQSKGYWVFQGKPVMPDQFVFELLDSLHRLTHLGYQKMKALLDRGESPYYMLNRDKTLQYVADSCTVCAQVNASKAKIGAGVRVRGHRPGTHWEIDFTEVKPGLYGYKYLLVFVDTFSGWVEAFPTKHETAKIVTKKLLEEIFPRFGMPQVLGTDNGPAFVSQVSQSVAKLLGIDWKLHCAYRPQSSGQVERMNRTIKETLTKLTLATGTRDWVLLLPLALYRARNTPGPHGLTPYEILYGAPPPLVNFHDPEMSKFTNSPSLQAHLQALQAVQREVWKPLAAAYQDQLDQPVIPHPFRVGDTVWVRRHQTKNLEPRWKGPYTVLLTTPTALKVDGISAWIHAAHVKAATTPPIRPSWRVQRSQNPLKIRLTRGAP.

Gly2 carries N-myristoyl glycine; by host lipidation. The PTAP/PSAP motif motif lies at 109 to 112 (PTAP). The disordered stretch occupies residues 112–217 (PILPSGPSTQ…STTSRAFPLR (106 aa)). The short motif at 128–132 (LYPAL) is the LYPX(n)L motif element. Positions 161–164 (PPPY) match the PPXY motif motif. The residue at position 191 (Ser191) is a Phosphoserine; by host. Positions 344–392 (GRSPTNLAKVKGITQGPNESPSAFLERLKEAYRRYTPYDPEDHGQETSV) are interaction with host PIAS4. Residues 429 to 434 (IFNKRE) are interaction with host UBE2I. Composition is skewed to basic and acidic residues over residues 433 to 474 (RETP…REMS) and 485 to 498 (RQDR…RPQL). 2 disordered regions span residues 433–498 (RETP…RPQL) and 512–551 (WAKD…EPRI). The stretch at 437–477 (EEREERFRRETEENEERRRAEDEQREKERDRRRQREMSKLL) forms a coiled coil. The CCHC-type zinc finger occupies 501–518 (DQCAYCKEKGHWAKDCPK). The Peptidase A2 domain maps to 560-630 (VTFLVDTGAQ…CPYPLLGRDL (71 aa)). The active-site Protease; shared with dimeric partner is Asp565. In terms of domain architecture, Reverse transcriptase spans 740–931 (LDQGILVPCQ…KQVKYLGYLL (192 aa)). Residues Asp808, Asp882, Asp883, Asp1182, Glu1220, Asp1241, and Asp1311 each contribute to the Mg(2+) site. The 147-residue stretch at 1173–1319 (PDADHTWYTD…ADQAAREAAI (147 aa)) folds into the RNase H type-1 domain. The segment at 1386–1426 (HRLTHLGYQKMKALLDRGESPYYMLNRDKTLQYVADSCTVC) adopts an HHCC-type zinc-finger fold. Residues 1443–1601 (RGHRPGTHWE…TPYEILYGAP (159 aa)) enclose the Integrase catalytic domain. Residues Asp1454 and Asp1513 each contribute to the Mg(2+) site.

This sequence belongs to the retroviral Pol polyprotein family. As to quaternary structure, homohexamer; further associates as homomultimer. The virus core is composed of a lattice formed from hexagonal rings, each containing six capsid monomers. Interacts with mouse UBE2I and mouse PIAS4. In terms of assembly, interacts (via PPXY motif) with host NEDD4. Interacts (via PSAP motif) with host TSG101. Interacts (via LYPX(n)L motif) with host PDCD6IP. The reverse transcriptase is a monomer (Potential). Interacts (via RNase domains) with host release factor ETF1; this interaction is essential for translational readthrough of amber codon between viral gag and pol genes, as well as for viral replication. As to quaternary structure, homodimer. Mg(2+) is required as a cofactor. Ubiquitinated by ITCH. Gag can recruit the ubiquitin ligase Itch in an L domain-independent manner to facilitate virus release via a mechanism that involves Gag ubiquitination. In terms of processing, specific enzymatic cleavages by the viral protease yield mature proteins. The protease is released by autocatalytic cleavage. The polyprotein is cleaved during and after budding, this process is termed maturation. Post-translationally, sumoylated; which is required for virus replication. Phosphorylated on serine residues.

The protein localises to the virion. It localises to the host cell membrane. Its subcellular location is the host late endosome membrane. The protein resides in the host endosome. It is found in the host multivesicular body. The protein localises to the host cytoplasm. It carries out the reaction DNA(n) + a 2'-deoxyribonucleoside 5'-triphosphate = DNA(n+1) + diphosphate. It catalyses the reaction Endonucleolytic cleavage to 5'-phosphomonoester.. With respect to regulation, most efficiently inhibited by Amprenavir, which is able to block Gag-Pol processing in infected cells. In terms of biological role, plays a role in budding and is processed by the viral protease during virion maturation outside the cell. During budding, it recruits, in a PPXY-dependent or independent manner, Nedd4-like ubiquitin ligases that conjugate ubiquitin molecules to Gag-Pol, or to Gag-Pol binding host factors. Interaction with HECT ubiquitin ligases probably links the viral protein to the host ESCRT pathway and facilitates release. Functionally, targets Gag and gag-pol polyproteins to the plasma membrane via a multipartite membrane binding signal, that includes its myristoylated N-terminus. Also mediates nuclear localization of the pre-integration complex. Constituent of the pre-integration complex (PIC) which tethers the latter to mitotic chromosomes. This allows the integration of the viral genome into the host DNA. Its function is as follows. Forms the spherical core of the virion that encapsulates the genomic RNA-nucleocapsid complex. In terms of biological role, involved in the packaging and encapsidation of two copies of the genome. Binds with high affinity to conserved UCUG elements within the packaging signal, located near the 5'-end of the genome. This binding is dependent on genome dimerization. Acts as a nucleic acid chaperone which is involved in rearrangement of nucleic acid secondary structures during gRNA retrotranscription. Functionally, the aspartyl protease mediates proteolytic cleavages of Gag and Gag-Pol polyproteins during or shortly after the release of the virion from the plasma membrane. Cleavages take place as an ordered, step-wise cascade to yield mature proteins. This process is called maturation. Displays maximal activity during the budding process just prior to particle release from the cell (Potential). Cleaves the translation initiation factor eIF4G leading to the inhibition of host cap-dependent translation. RT is a multifunctional enzyme that converts the viral dimeric RNA genome into dsDNA in the cytoplasm, shortly after virus entry into the cell. This enzyme displays a DNA polymerase activity that can copy either DNA or RNA templates, and a ribonuclease H (RNase H) activity that cleaves the RNA strand of RNA-DNA heteroduplexes in a partially processive 3' to 5' endonucleasic mode. Conversion of viral genomic RNA into dsDNA requires many steps. A tRNA binds to the primer-binding site (PBS) situated at the 5' end of the viral RNA. RT uses the 3' end of the tRNA primer to perform a short round of RNA-dependent minus-strand DNA synthesis. The reading proceeds through the U5 region and ends after the repeated (R) region which is present at both ends of viral RNA. The portion of the RNA-DNA heteroduplex is digested by the RNase H, resulting in a ssDNA product attached to the tRNA primer. This ssDNA/tRNA hybridizes with the identical R region situated at the 3' end of viral RNA. This template exchange, known as minus-strand DNA strong stop transfer, can be either intra- or intermolecular. RT uses the 3' end of this newly synthesized short ssDNA to perform the RNA-dependent minus-strand DNA synthesis of the whole template. RNase H digests the RNA template except for a polypurine tract (PPT) situated at the 5' end of the genome. It is not clear if both polymerase and RNase H activities are simultaneous. RNase H probably can proceed both in a polymerase-dependent (RNA cut into small fragments by the same RT performing DNA synthesis) and a polymerase-independent mode (cleavage of remaining RNA fragments by free RTs). Secondly, RT performs DNA-directed plus-strand DNA synthesis using the PPT that has not been removed by RNase H as primers. PPT and tRNA primers are then removed by RNase H. The 3' and 5' ssDNA PBS regions hybridize to form a circular dsDNA intermediate. Strand displacement synthesis by RT to the PBS and PPT ends produces a blunt ended, linear dsDNA copy of the viral genome that includes long terminal repeats (LTRs) at both ends. Its function is as follows. Catalyzes viral DNA integration into the host chromosome, by performing a series of DNA cutting and joining reactions. This enzyme activity takes place after virion entry into a cell and reverse transcription of the RNA genome in dsDNA. The first step in the integration process is 3' processing. This step requires a complex comprising the viral genome, matrix protein and integrase. This complex is called the pre-integration complex (PIC). The integrase protein removes 2 nucleotides from each 3' end of the viral DNA, leaving recessed CA OH's at the 3' ends. In the second step that requires cell division, the PIC enters cell nucleus. In the third step, termed strand transfer, the integrase protein joins the previously processed 3' ends to the 5' ends of strands of target cellular DNA at the site of integration. The last step is viral DNA integration into host chromosome. This Mus musculus (Mouse) protein is Gag-Pol polyprotein (pol).